The following is a 573-amino-acid chain: MFKSQLRTATARSSFRSLASKLNPQRFNSSKTPLLNATRGSNRSKNSLIALAISLSAVSSSYYLYQKDKFISADVPHWKDIELTPEIVSQHNKKDDLWVVLNGQVYDLTDFLPNHPGGQKIIIRYAGKDATKIFVPIHPPDTIEKFIPPEKHLGPLVGEFEQEEEELSDEEIDRLERIERKPPLSQMINLHDFETIARQILPPPALAYYCSAADDEVTLRENHNAYHRIFFNPKILIDVKDVDISTEFFGEKTSAPFYISATALAKLGHPEGEVAIAKGAGREDVVQMISTLASCSFDEIADARIPGQQQWYQLYVNADRSITEKAVRHAEERGMKGLFITVDAPSLGRREKDMKMKFEADSDVQGDDEDIDRSQGASRALSSFIDPSLSWKDIAFIKSITKMPIVIKGVQRKEDVLLAAEHGLQGVVLSNHGGRQLDYTRAPVEVLAEVMPILKERGLDQKIDIFVDGGVRRGTDVLKALCLGAKGVGLGRPFLYAMSSYGDKGVTKAIQLLKDEIEMNMRLLGVNKIEELTPELLDTRSIHNRAVPVAKDYLYEQNYQRMSGAEFRPGIED.

A mitochondrion-targeting transit peptide spans 1–73 (MFKSQLRTAT…LYQKDKFISA (73 aa)). The Cytochrome b5 heme-binding domain occupies 80-157 (DIELTPEIVS…PPEKHLGPLV (78 aa)). Heme b contacts are provided by histidine 115, histidine 138, and tyrosine 208. An FMN hydroxy acid dehydrogenase domain is found at 182–542 (PPLSQMINLH…TPELLDTRSI (361 aa)). Tyrosine 208 contributes to the pyruvate binding site. Residues 260 to 263 (SATA), serine 290, and glutamine 313 each bind FMN. Position 315 (tyrosine 315) interacts with pyruvate. Threonine 341 is a binding site for FMN. Lysine 357 serves as a coordination point for heme b. Lysine 408 provides a ligand contact to FMN. Histidine 432 and arginine 435 together coordinate pyruvate. Residues 468-472 (DGGVR) and 491-492 (GR) each bind FMN.

The protein in the N-terminal section; belongs to the cytochrome b5 family. It in the C-terminal section; belongs to the FMN-dependent alpha-hydroxy acid dehydrogenase family. As to quaternary structure, homotetramer. It depends on FMN as a cofactor. Requires heme b as cofactor.

It localises to the mitochondrion intermembrane space. It catalyses the reaction (S)-lactate + 2 Fe(III)-[cytochrome c] = 2 Fe(II)-[cytochrome c] + pyruvate + 2 H(+). Its function is as follows. Catalyzes the oxidation of (S)-lactate (L-lactate) to pyruvate with subsequent transfer of electrons to cytochrome c. Is involved in the utilization of (S)-lactate as a sole source of carbon for growth. The polypeptide is L-lactate dehydrogenase (cytochrome) (CYB2) (Wickerhamomyces anomalus (Yeast)).